The chain runs to 168 residues: Photosystem I assembly protein Ycf3 (168 aa).

TPR repeat units lie at residues 35 to 68 (AFTY…EIDP), 72 to 105 (SYIL…NPFL), and 120 to 153 (GEQA…TPGN).

This sequence belongs to the Ycf3 family.

It is found in the plastid. The protein localises to the chloroplast thylakoid membrane. In terms of biological role, essential for the assembly of the photosystem I (PSI) complex. May act as a chaperone-like factor to guide the assembly of the PSI subunits. The sequence is that of Photosystem I assembly protein Ycf3 from Nicotiana sylvestris (Wood tobacco).